A 626-amino-acid chain; its full sequence is Carnitine O-acetyltransferase (626 aa).

K93 is subject to N6-succinyllysine. Position 261 is an N6-acetyllysine; alternate (K261). The residue at position 261 (K261) is an N6-succinyllysine; alternate. K268 is modified (N6-acetyllysine). H343 functions as the Proton acceptor in the catalytic mechanism. Residues K419 and 423–430 (KSEKLSPD) each bind CoA. Positions 452 and 454 each coordinate (R)-carnitine. S456 contributes to the CoA binding site. T465 is a binding site for (R)-carnitine. CoA contacts are provided by R504 and Q555. A Microbody targeting signal motif is present at residues 624–626 (AKL).

This sequence belongs to the carnitine/choline acetyltransferase family. Monomer. As to expression, mostly in skeletal muscle, less in heart, liver and pancreas, only weakly detectable in brain, placenta, lung and kidney.

The protein resides in the endoplasmic reticulum. It is found in the peroxisome. It localises to the mitochondrion inner membrane. The protein localises to the mitochondrion. It carries out the reaction (R)-carnitine + acetyl-CoA = O-acetyl-(R)-carnitine + CoA. The catalysed reaction is propanoyl-CoA + (R)-carnitine = O-propanoyl-(R)-carnitine + CoA. The enzyme catalyses butanoyl-CoA + (R)-carnitine = O-butanoyl-(R)-carnitine + CoA. It catalyses the reaction hexanoyl-CoA + (R)-carnitine = O-hexanoyl-(R)-carnitine + CoA. It carries out the reaction octanoyl-CoA + (R)-carnitine = O-octanoyl-(R)-carnitine + CoA. The catalysed reaction is decanoyl-CoA + (R)-carnitine = O-decanoyl-(R)-carnitine + CoA. The enzyme catalyses 3-methylbutanoyl-CoA + (R)-carnitine = O-3-methylbutanoyl-(R)-carnitine + CoA. It catalyses the reaction 2-methylpropanoyl-CoA + (R)-carnitine = O-isobutanoyl-(R)-carnitine + CoA. It carries out the reaction 2-methylbutanoyl-CoA + (R)-carnitine = O-2-methylbutanoyl-(R)-carnitine + CoA. The catalysed reaction is acetoacetyl-CoA + (R)-carnitine = O-3-oxobutanoyl-(R)-carnitine + CoA. The enzyme catalyses 3-hydroxybutanoyl-CoA + (R)-carnitine = O-3-hydroxybutanoyl-(R)-carnitine + CoA. It catalyses the reaction 4,8-dimethylnonanoyl-CoA + (R)-carnitine = O-4,8-dimethylnonanoyl-(R)-carnitine + CoA. It carries out the reaction 2,6-dimethylheptanoyl-CoA + (R)-carnitine = O-2,6-dimethylheptanoyl-(R)-carnitine + CoA. Its function is as follows. Catalyzes the reversible transfer of acyl groups from carnitine to coenzyme A (CoA) and regulates the acyl-CoA/CoA ratio. Also plays a crucial role in the transport of fatty acids for beta-oxidation. Responsible for the synthesis of short- and branched-chain acylcarnitines. Active towards some branched-chain amino acid oxidation pathway (BCAAO) intermediates. Trans-2-enoyl-CoAs and 2-methylacyl-CoAs are poor substrates. In Homo sapiens (Human), this protein is Carnitine O-acetyltransferase.